The following is a 428-amino-acid chain: 3-phosphoshikimate 1-carboxyvinyltransferase (428 aa).

Positions 22, 23, and 27 each coordinate 3-phosphoshikimate. K22 contributes to the phosphoenolpyruvate binding site. Phosphoenolpyruvate contacts are provided by G96 and R124. 3-phosphoshikimate is bound by residues S169, S170, Q171, S197, D313, N336, and K340. A phosphoenolpyruvate-binding site is contributed by Q171. The Proton acceptor role is filled by D313. Positions 344, 386, and 411 each coordinate phosphoenolpyruvate.

The protein belongs to the EPSP synthase family. As to quaternary structure, monomer.

The protein localises to the cytoplasm. The catalysed reaction is 3-phosphoshikimate + phosphoenolpyruvate = 5-O-(1-carboxyvinyl)-3-phosphoshikimate + phosphate. It participates in metabolic intermediate biosynthesis; chorismate biosynthesis; chorismate from D-erythrose 4-phosphate and phosphoenolpyruvate: step 6/7. Catalyzes the transfer of the enolpyruvyl moiety of phosphoenolpyruvate (PEP) to the 5-hydroxyl of shikimate-3-phosphate (S3P) to produce enolpyruvyl shikimate-3-phosphate and inorganic phosphate. In Proteus mirabilis (strain HI4320), this protein is 3-phosphoshikimate 1-carboxyvinyltransferase.